The primary structure comprises 1265 residues: MEPSGGGLGPGRGTRDKKKGRSPDELPATGGDGGKHKKFTLKRLMADELERFTSMRIKKEKEKPNSAHRNSSASYGDDPTAQSLQDISDDQVLVLFEQMLVDMNLNEEKQQPLREKDIVIKREMVSQYLHTSKAGMNQKESSRSAMMYIQELRSGLRDMHLLSCLESLRVSLNNNPVSWVQTFGAEGLASLLDILKRLHDEKEETSGNYDSRNQHEIIRCLKAFMNNKFGIKTMLETEEGILLLVRAMDPAVPNMMIDAAKLLSALCILPQPEDMNERVLEAMTERAEMEEVERFQPLLDGLKSGTSIALKVGCLQLINALITPAEELDFRVHIRSELMRLGLHQVLQELREIDNDDMRVQLNVFDEQGDEDFFDLKGRLDDIRMEMDDFGEVFQIILNTVKDSKAEPHFLSILQHLLLVRNDYEARPQYYKLIEECVSQIVLHKNGTDPDFKCRHLQIDIEGLVDQMIDKTKVEKSEAKATELEKKLDSELTARHELQVEMKKMENDFEQKLQDLQGEKDALDSEKQQITTQKQDLEAEVSKLTGEVAKLSKELEDAKKEMASLSAVAVAPSVSSSAAVPQAPPLPGTSGTVIPPPPPPPLPGGAVPPPPPPPLPAGTGIPPPPPLPGGACISSSPQLFGSTAIPPPPPLPGATAIPPPPPLPGDTAIPPPPPLPGXTAIPPPPPLPGATGVPPPPPPLPGSVGVPPPPPLPGGPGLPPPPPPFPGAPGIPPPPPGMGVPPPPPFGFGIPAAPVLPFGLTPKKVYKPEVQLRRPNWSKFVAEDLSQDCFWTKVKEDRFENNELFAKLTLAFSAQTKTSLAKKDQEGGEEKKSVQKKKVKELKVLDSKTAQNLSIFLGSFRMPYQEIKNVILEVNEAVLTESMIQNLIKQMPEPEQLKMLSELKEEYDDLAESEQFGVVMGTVPRLRPRLNAILFKLQFSEQVENIKPEIVSVTAACEELRKSENFSSLLELTLLVGNYMNAGSRNAGAFGFNISFLCKLRDTKSADQKMTLLHFLAELCETDHPDVLKFPDELAHVEKASRVSAENLQKNLDQMKKQIADVERDVQNFPAATDEKDKFVEKMTSFVKDAQEQYNKLRMMHSNMETLYKELGDYFVFDPKKLSVEEFFMDLHNFRNMFLQAVKENQKRRETEEKMRRAKLAKEKAEKERLEKQQKREQLIDMNAEGDETGVMDSLLEALQSGAAFRRKRGPRQVNRKAGCAVTSLLASELTKDDAVAASSAKVPKKSEGVTTILEEAKELVGRAS.

Met-1 bears the N-acetylmethionine mark. Gly residues predominate over residues 1–12 (MEPSGGGLGPGR). 2 disordered regions span residues 1-42 (MEPS…FTLK) and 54-83 (SMRI…TAQS). Ser-22 is subject to Phosphoserine. The span at 54–65 (SMRIKKEKEKPN) shows a compositional bias: basic and acidic residues. The span at 67 to 83 (AHRNSSASYGDDPTAQS) shows a compositional bias: polar residues. In terms of domain architecture, GBD/FH3 spans 84–449 (LQDISDDQVL…QIVLHKNGTD (366 aa)). A coiled-coil region spans residues 474–568 (VEKSEAKATE…KKEMASLSAV (95 aa)). The tract at residues 573–742 (SVSSSAAVPQ…PPPPGMGVPP (170 aa)) is disordered. Pro residues-rich tracts occupy residues 594 to 628 (IPPP…PPLP) and 645 to 742 (IPPP…GVPP). The FH1 domain occupies 625 to 757 (PPLPGGACIS…FGIPAAPVLP (133 aa)). Thr-761 carries the post-translational modification Phosphothreonine. The FH2 domain occupies 762-1164 (PKKVYKPEVQ…MRRAKLAKEK (403 aa)). 2 positions are modified to N6-acetyllysine: Lys-1050 and Lys-1096. Residue Tyr-1114 is modified to Phosphotyrosine. A coiled-coil region spans residues 1141–1185 (AVKENQKRRETEEKMRRAKLAKEKAEKERLEKQQKREQLIDMNAE). The region spanning 1187 to 1215 (DETGVMDSLLEALQSGAAFRRKRGPRQVN) is the DAD domain. Residue Ser-1247 is modified to Phosphoserine.

This sequence belongs to the formin homology family. Diaphanous subfamily. As to quaternary structure, homodimer. Interacts with the GTP-bound form of RHOA. Interacts with RHOC, PFY1, MAPRE1, BAIAP2 and APC. Interacts with SCAI. Interacts with DCAF7, via FH2 domain. Interacts with NCDN. Interacts with OSBPL10, OSBPL2, VIM, TUBB and DYN1. Post-translationally, phosphorylation at Thr-761 is stimulated by cAMP and regulates stability, complex formation and mitochondrial movement. As to expression, expressed in testis. Present in Sertoli cells (at protein level).

The protein localises to the cell membrane. It localises to the cell projection. The protein resides in the ruffle membrane. It is found in the cytoplasm. Its subcellular location is the cytoskeleton. The protein localises to the microtubule organizing center. It localises to the centrosome. The protein resides in the spindle. It is found in the nucleus. Its function is as follows. Actin nucleation and elongation factor required for the assembly of F-actin structures, such as actin cables and stress fibers. Binds to the barbed end of the actin filament and slows down actin polymerization and depolymerization. Required for cytokinesis, and transcriptional activation of the serum response factor. DFR proteins couple Rho and Src tyrosine kinase during signaling and the regulation of actin dynamics. Functions as a scaffold protein for MAPRE1 and APC to stabilize microtubules and promote cell migration. Has neurite outgrowth promoting activity. Acts in a Rho-dependent manner to recruit PFY1 to the membrane. The MEMO1-RHOA-DIAPH1 signaling pathway plays an important role in ERBB2-dependent stabilization of microtubules at the cell cortex. It controls the localization of APC and CLASP2 to the cell membrane, via the regulation of GSK3B activity. In turn, membrane-bound APC allows the localization of the MACF1 to the cell membrane, which is required for microtubule capture and stabilization. Plays a role in the regulation of cell morphology and cytoskeletal organization. Required in the control of cell shape. Also acts as an actin nucleation and elongation factor in the nucleus by promoting nuclear actin polymerization inside the nucleus to drive serum-dependent SRF-MRTFA activity. The chain is Protein diaphanous homolog 1 from Rattus norvegicus (Rat).